The following is a 248-amino-acid chain: Small ribosomal subunit protein uS3 (248 aa).

The region spanning 38–106 (IREFLSKGLD…QVALNILEVK (69 aa)) is the KH type-2 domain. A compositionally biased stretch (basic and acidic residues) spans 214 to 230 (SEINAPAERRGRGDRNA). Positions 214 to 248 (SEINAPAERRGRGDRNARPRRGGQRRQRAEQKQEG) are disordered.

The protein belongs to the universal ribosomal protein uS3 family. Part of the 30S ribosomal subunit. Forms a tight complex with proteins S10 and S14.

Functionally, binds the lower part of the 30S subunit head. Binds mRNA in the 70S ribosome, positioning it for translation. In Corynebacterium glutamicum (strain R), this protein is Small ribosomal subunit protein uS3.